Here is a 537-residue protein sequence, read N- to C-terminus: Putative cysteine ligase BshC (537 aa).

The stretch at 422–450 (IEKVEGMIEQQRRLNKDLLDEVAGNQNNI) forms a coiled coil.

It belongs to the BshC family.

Involved in bacillithiol (BSH) biosynthesis. May catalyze the last step of the pathway, the addition of cysteine to glucosamine malate (GlcN-Mal) to generate BSH. This chain is Putative cysteine ligase BshC, found in Staphylococcus aureus (strain Mu3 / ATCC 700698).